A 353-amino-acid chain; its full sequence is Photosystem II protein D1 (353 aa).

Position 2 is an N-acetylthreonine (Thr2). Thr2 carries the phosphothreonine modification. A run of 3 helical transmembrane segments spans residues 29–46, 118–133, and 142–156; these read YIGW…TATS, HFLL…EWEL, and WIAV…AATA. His118 contacts chlorophyll a. Pheophytin a is bound at residue Tyr126. [CaMn4O5] cluster contacts are provided by Asp170 and Glu189. Residues 197-218 form a helical membrane-spanning segment; it reads FHMLGVAGVFGGSLFSAMHGSL. His198 contacts chlorophyll a. A quinone contacts are provided by residues His215 and 264 to 265; that span reads SF. Position 215 (His215) interacts with Fe cation. His272 serves as a coordination point for Fe cation. A helical transmembrane segment spans residues 274 to 288; the sequence is FLAAWPVVGIWFTAL. Positions 332, 333, 342, and 344 each coordinate [CaMn4O5] cluster. The propeptide occupies 345-353; that stretch reads ALEVPSING.

This sequence belongs to the reaction center PufL/M/PsbA/D family. In terms of assembly, PSII is composed of 1 copy each of membrane proteins PsbA, PsbB, PsbC, PsbD, PsbE, PsbF, PsbH, PsbI, PsbJ, PsbK, PsbL, PsbM, PsbT, PsbX, PsbY, PsbZ, Psb30/Ycf12, at least 3 peripheral proteins of the oxygen-evolving complex and a large number of cofactors. It forms dimeric complexes. It depends on The D1/D2 heterodimer binds P680, chlorophylls that are the primary electron donor of PSII, and subsequent electron acceptors. It shares a non-heme iron and each subunit binds pheophytin, quinone, additional chlorophylls, carotenoids and lipids. D1 provides most of the ligands for the Mn4-Ca-O5 cluster of the oxygen-evolving complex (OEC). There is also a Cl(-1) ion associated with D1 and D2, which is required for oxygen evolution. The PSII complex binds additional chlorophylls, carotenoids and specific lipids. as a cofactor. Tyr-161 forms a radical intermediate that is referred to as redox-active TyrZ, YZ or Y-Z. Post-translationally, C-terminally processed by CTPA; processing is essential to allow assembly of the oxygen-evolving complex and thus photosynthetic growth.

It is found in the plastid. Its subcellular location is the chloroplast thylakoid membrane. It carries out the reaction 2 a plastoquinone + 4 hnu + 2 H2O = 2 a plastoquinol + O2. Photosystem II (PSII) is a light-driven water:plastoquinone oxidoreductase that uses light energy to abstract electrons from H(2)O, generating O(2) and a proton gradient subsequently used for ATP formation. It consists of a core antenna complex that captures photons, and an electron transfer chain that converts photonic excitation into a charge separation. The D1/D2 (PsbA/PsbD) reaction center heterodimer binds P680, the primary electron donor of PSII as well as several subsequent electron acceptors. This chain is Photosystem II protein D1, found in Agrostis stolonifera (Creeping bentgrass).